The sequence spans 1671 residues: AF4/FMR2 family member lilli (1671 aa).

Disordered regions lie at residues 53 to 79, 126 to 304, 393 to 599, 723 to 761, 774 to 1162, and 1185 to 1311; these read YSQN…QQGI, SAPG…EKDV, LAGE…SNKW, DSGT…QLPG, PTQS…TTPH, and KLTP…LQIG. The span at 70-79 shows a compositional bias: basic and acidic residues; it reads REKIERQQGI. Low complexity-rich tracts occupy residues 145-179 and 210-242; these read SLGH…QQQQ and PSSS…SSGG. Thr-416 bears the Phosphothreonine mark. Over residues 424-437 the composition is skewed to basic and acidic residues; it reads LKTEKNHSLEKQDS. The span at 439-450 shows a compositional bias: acidic residues; sequence LENDLELSESED. Residues Ser-446 and Ser-448 each carry the phosphoserine modification. A compositionally biased stretch (low complexity) spans 459–479; the sequence is SAGNSSNSSESDSSESGSESS. Over residues 487 to 496 the composition is skewed to basic residues; that stretch reads HPNHQQHHHQ. Composition is skewed to low complexity over residues 497–522 and 561–587; these read LQQQ…PQPL and PAGV…GSSS. Residues 588 to 599 show a composition bias toward polar residues; it reads NKTPSPTESNKW. The span at 723 to 755 shows a compositional bias: low complexity; sequence DSGTSASGSSSSSSSSSDSAVGGEVVPMPGPGE. A compositionally biased stretch (polar residues) spans 774–786; that stretch reads PTQSQKAPPSNSV. Positions 800–810 are enriched in basic residues; the sequence is QRQKKPRKKKA. Residues Ser-819 and Ser-820 each carry the phosphoserine modification. The segment at residues 849 to 861 is a DNA-binding region (a.T hook); that stretch reads KKGRGRPRKQQQS. Residues 858–896 are compositionally biased toward low complexity; that stretch reads QQQSGGSGNLSSASAGSSSQTKGPTLTAAKKPLAKTPLA. A phosphoserine mark is found at Ser-869 and Ser-871. A compositionally biased stretch (polar residues) spans 907 to 917; it reads SQSSSNGNTPT. Composition is skewed to low complexity over residues 947–963 and 988–1002; these read SSSA…SSSS and ALLG…SSGS. The span at 1009–1020 shows a compositional bias: polar residues; that stretch reads SRSQVGSGQALA. The span at 1032-1058 shows a compositional bias: low complexity; that stretch reads SQHSQHLSSSECSSSSGGCTAVCSSSS. Positions 1063 to 1080 are enriched in basic and acidic residues; that stretch reads EGRREKERERKPKSDKNK. Pro residues predominate over residues 1120–1130; sequence QPPPPHAPPAA. The span at 1188 to 1203 shows a compositional bias: polar residues; the sequence is PAQQNGHLTPKDQATN. 2 stretches are compositionally biased toward basic and acidic residues: residues 1224–1241 and 1250–1280; these read EHPV…EAKF and FQLK…EQPP. Phosphoserine is present on Ser-1360. Residue Thr-1362 is modified to Phosphothreonine. The segment covering 1562-1581 has biased composition (low complexity); it reads NTPSSISPSNSVGSQGSGSN. Residues 1562–1586 form a disordered region; sequence NTPSSISPSNSVGSQGSGSNTPPGR.

The protein belongs to the AF4 family.

It localises to the nucleus. Has a role in transcriptional regulation. Acts in parallel with the Ras/MAPK and the PI3K/PKB pathways in the control of cell identity and cellular growth. Essential for regulation of the cytoskeleton and cell growth but not for cell proliferation or growth rate. Required specifically for the microtubule-based basal transport of lipid droplets. Plays a partially redundant function downstream of Raf in cell fate specification in the developing eye. Pair-rule protein that regulates embryonic cellularization, gastrulation and segmentation. The protein is AF4/FMR2 family member lilli of Drosophila yakuba (Fruit fly).